A 364-amino-acid chain; its full sequence is Dual-specificity RNA methyltransferase RlmN (364 aa).

Glu-91 acts as the Proton acceptor in catalysis. Residues 97 to 333 (ESDRGTLCIS…VTVRKTRGDD (237 aa)) enclose the Radical SAM core domain. Residues Cys-104 and Cys-338 are joined by a disulfide bond. 3 residues coordinate [4Fe-4S] cluster: Cys-111, Cys-115, and Cys-118. S-adenosyl-L-methionine-binding positions include 164–165 (GE), Ser-196, 218–220 (SLH), and Asn-295. Cys-338 functions as the S-methylcysteine intermediate in the catalytic mechanism.

This sequence belongs to the radical SAM superfamily. RlmN family. The cofactor is [4Fe-4S] cluster.

It localises to the cytoplasm. The enzyme catalyses adenosine(2503) in 23S rRNA + 2 reduced [2Fe-2S]-[ferredoxin] + 2 S-adenosyl-L-methionine = 2-methyladenosine(2503) in 23S rRNA + 5'-deoxyadenosine + L-methionine + 2 oxidized [2Fe-2S]-[ferredoxin] + S-adenosyl-L-homocysteine. The catalysed reaction is adenosine(37) in tRNA + 2 reduced [2Fe-2S]-[ferredoxin] + 2 S-adenosyl-L-methionine = 2-methyladenosine(37) in tRNA + 5'-deoxyadenosine + L-methionine + 2 oxidized [2Fe-2S]-[ferredoxin] + S-adenosyl-L-homocysteine. Specifically methylates position 2 of adenine 2503 in 23S rRNA and position 2 of adenine 37 in tRNAs. m2A2503 modification seems to play a crucial role in the proofreading step occurring at the peptidyl transferase center and thus would serve to optimize ribosomal fidelity. This Neisseria meningitidis serogroup C / serotype 2a (strain ATCC 700532 / DSM 15464 / FAM18) protein is Dual-specificity RNA methyltransferase RlmN.